The chain runs to 962 residues: CRACD-like protein (962 aa).

Disordered regions lie at residues 38–102, 131–174, and 212–871; these read GKKK…PESG, NVKM…HDVG, and PAES…QEPV. The segment covering 46–61 has biased composition (polar residues); sequence PSSTGSSTWKQSQTRN. Position 92 is a phosphoserine (Ser92). Over residues 224–244 the composition is skewed to basic residues; it reads AKHKLQVKPRNQRSSKMRRLS. The span at 245–256 shows a compositional bias: polar residues; that stretch reads SRAQSESLSDLT. Basic and acidic residues predominate over residues 266-278; it reads EKPLLEVSPEERP. Pro residues-rich tracts occupy residues 292-303 and 354-365; these read EPGPPAPLPPPG and PPSPPEGPPNPG. Residues 407–425 show a composition bias toward low complexity; it reads PEGDTTPPETDPAATSEAP. Composition is skewed to basic and acidic residues over residues 429–440 and 459–480; these read DGPERSVPKEAE and EPER…ERIG. Ser490 carries the post-translational modification Phosphoserine. Residues 503-521 are compositionally biased toward low complexity; sequence AAASEGPAASPPLAAAESP. 4 stretches are compositionally biased toward basic and acidic residues: residues 536–546, 555–570, 631–642, and 709–728; these read APERPKAERAE, AAPE…ELRG, KLAERGPQDSGD, and YSAE…EEKC. Positions 753-764 are enriched in pro residues; that stretch reads PEPLSSKPPLPR. Composition is skewed to basic and acidic residues over residues 784 to 806 and 844 to 869; these read PGER…RGAE and QEDK…RGQE.

This Homo sapiens (Human) protein is CRACD-like protein.